Consider the following 57-residue polypeptide: UPF0391 membrane protein bsl6560 (57 aa).

The next 2 helical transmembrane spans lie at 4 to 24 (WVVT…GGIA) and 30 to 50 (IAKI…VVGL).

This sequence belongs to the UPF0391 family.

It is found in the cell membrane. The sequence is that of UPF0391 membrane protein bsl6560 from Bradyrhizobium diazoefficiens (strain JCM 10833 / BCRC 13528 / IAM 13628 / NBRC 14792 / USDA 110).